The sequence spans 347 residues: MSSTDDRRFEVLRAIVADYVSTQEPVGSKALVERHNLGVSSATVRNDMAFLESEGYIAQPHTSSGRVPTDKGYRQFVDRIADVKPLSTAERRAILEFLESGVDLDDVLRRGVRLLAQLTRQVAVVQYPTLSASSVRHLEVVALTPARLLLVLITDSGRVDQRIVELGDVLDDEDLARLRGLLGGALDGKRLAAASIAVSELADEAPEDLRDAVVRSATVLVETLVEHPEERLVLGGTANLTRNAADFSGISGFPGSLRAVLEALEEQVVVLKLLAATQDAGTVTVRIGEETQVEQMRGTSVISTGYGAAGTVLGGMGVLGPTRMDYPGTIASVAAVARYIGQVLAER.

This sequence belongs to the HrcA family.

Negative regulator of class I heat shock genes (grpE-dnaK-dnaJ and groELS operons). Prevents heat-shock induction of these operons. The polypeptide is Heat-inducible transcription repressor HrcA (Rhodococcus jostii (strain RHA1)).